The primary structure comprises 91 residues: Cell division topological specificity factor (91 aa).

It belongs to the MinE family.

Prevents the cell division inhibition by proteins MinC and MinD at internal division sites while permitting inhibition at polar sites. This ensures cell division at the proper site by restricting the formation of a division septum at the midpoint of the long axis of the cell. This chain is Cell division topological specificity factor, found in Lachnospira eligens (strain ATCC 27750 / DSM 3376 / VPI C15-48 / C15-B4) (Eubacterium eligens).